Consider the following 184-residue polypeptide: Glutathione-regulated potassium-efflux system ancillary protein KefG (184 aa).

Belongs to the NAD(P)H dehydrogenase (quinone) family. KefG subfamily. In terms of assembly, interacts with KefB.

It localises to the cell inner membrane. The catalysed reaction is a quinone + NADH + H(+) = a quinol + NAD(+). The enzyme catalyses a quinone + NADPH + H(+) = a quinol + NADP(+). Regulatory subunit of a potassium efflux system that confers protection against electrophiles. Required for full activity of KefB. The polypeptide is Glutathione-regulated potassium-efflux system ancillary protein KefG (Cronobacter sakazakii (strain ATCC BAA-894) (Enterobacter sakazakii)).